The primary structure comprises 205 residues: Protease (205 aa).

Catalysis depends on residues histidine 54, aspartate 71, and cysteine 120.

It belongs to the peptidase C5 family. As to quaternary structure, interacts with protease cofactor pVI-C; this interaction is necessary for protease activation.

Its subcellular location is the virion. The protein resides in the host nucleus. It catalyses the reaction Cleaves proteins of the adenovirus and its host cell at two consensus sites: -Yaa-Xaa-Gly-Gly-|-Xaa- and -Yaa-Xaa-Gly-Xaa-|-Gly- (in which Yaa is Met, Ile or Leu, and Xaa is any amino acid).. Requires DNA and protease cofactor for maximal activation. Inside nascent virions, becomes partially activated by binding to the viral DNA, allowing it to cleave the cofactor that binds to the protease and fully activates it. Actin, like the viral protease cofactor, seems to act as a cofactor in the cleavage of cytokeratin 18 and of actin itself. Functionally, cleaves viral precursor proteins (pTP, pIIIa, pVI, pVII, pVIII, and pX) inside newly assembled particles giving rise to mature virions. Protease complexed to its cofactor slides along the viral DNA to specifically locate and cleave the viral precursors. Mature virions have a weakened organization compared to the unmature virions, thereby facilitating subsequent uncoating. Without maturation, the particle lacks infectivity and is unable to uncoat. Late in adenovirus infection, in the cytoplasm, may participate in the cytoskeleton destruction. Cleaves host cell cytoskeletal keratins K7 and K18. In Bos taurus (Bovine), this protein is Protease.